A 90-amino-acid chain; its full sequence is Phosphocarrier protein HPr (90 aa).

The region spanning 1-89 (MPAREITIIN…ELINNFFDEG (89 aa)) is the HPr domain. His-15 functions as the Pros-phosphohistidine intermediate in the catalytic mechanism.

This sequence belongs to the HPr family.

It is found in the cytoplasm. In terms of biological role, general (non sugar-specific) component of the phosphoenolpyruvate-dependent sugar phosphotransferase system (sugar PTS). This major carbohydrate active-transport system catalyzes the phosphorylation of incoming sugar substrates concomitantly with their translocation across the cell membrane. The phosphoryl group from phosphoenolpyruvate (PEP) is transferred to the phosphoryl carrier protein HPr by enzyme I. Phospho-HPr then transfers it to the PTS EIIA domain. The chain is Phosphocarrier protein HPr (ptsH) from Pseudomonas putida (Arthrobacter siderocapsulatus).